Consider the following 692-residue polypeptide: Putative receptor-like protein kinase At1g80870 (692 aa).

A helical transmembrane segment spans residues 20 to 40; that stretch reads LFLILTISSSLVIFFAILYFI. Positions 81–673 constitute a Protein kinase domain; the sequence is FDESNVIGKG…GEMDISSTAF (593 aa). ATP is bound by residues 87 to 95 and K109; that span reads IGKGGSGTV. The Proton acceptor role is filled by D206. Disordered stretches follow at residues 427 to 446 and 511 to 533; these read EISE…HRNM and RRKS…GSEM. Basic residues-rich tracts occupy residues 432–444 and 511–524; these read KNKR…KKHR and RRKS…KKKN.

The protein belongs to the protein kinase superfamily. Ser/Thr protein kinase family.

Its subcellular location is the cell membrane. It carries out the reaction L-seryl-[protein] + ATP = O-phospho-L-seryl-[protein] + ADP + H(+). The enzyme catalyses L-threonyl-[protein] + ATP = O-phospho-L-threonyl-[protein] + ADP + H(+). The protein is Putative receptor-like protein kinase At1g80870 of Arabidopsis thaliana (Mouse-ear cress).